A 689-amino-acid polypeptide reads, in one-letter code: Sp110 nuclear body protein (689 aa).

Residues 1 to 108 form the HSR domain; that stretch reads MFTMTRAMEE…IYRSFKRVGA (108 aa). Disordered regions lie at residues 131–216 and 231–385; these read SSLH…MPSL and QIRD…GHGI. Positions 138–148 are enriched in pro residues; that stretch reads ALPPPQPPQPS. Polar residues predominate over residues 159–168; sequence PGTSSQQSDE. Residues Ser175 and Ser177 each carry the phosphoserine modification. Residues 190-204 are compositionally biased toward polar residues; sequence GRSTSVTNDKLTSKM. Ser244 and Ser256 each carry phosphoserine. Residues 276-296 show a composition bias toward basic residues; sequence KGKKRKRCIWSTPKRRHKKKS. The short motif at 281 to 294 is the Nuclear localization signal element; it reads KRCIWSTPKRRHKK. 2 stretches are compositionally biased toward basic and acidic residues: residues 314–325 and 334–350; these read RVDQVPQKKDDS and RAQKARTECARKSRSEE. The residue at position 380 (Ser380) is a Phosphoserine. The Nuclear localization signal signature appears at 428-444; the sequence is KKKEKDICSSSKRRFQK. Residues 454 to 535 enclose the SAND domain; it reads SDTVDFHCSK…GELLKRKNSD (82 aa). The nuclear hormone receptor interaction stretch occupies residues 525-529; the sequence is LGELL. A PHD-type zinc finger spans residues 534 to 580; that stretch reads SDECEVCCQGGQLLCCGTCPRVFHEDCHIPPVEAKRMLWSCTFCRMK. In terms of domain architecture, Bromo spans 583 to 674; it reads SGSQQCHHVS…AEFEKDLKDV (92 aa).

In terms of assembly, (Microbial infection) Isoform 3 interacts with HCV core protein. Post-translationally, phosphorylated (isoform 2). Highly expressed in peripheral blood leukocytes and spleen. Detected at intermediate levels in thymus, prostate, testis, ovary, small intestine and colon, and at low levels in heart, brain, placenta, lung, liver, skeletal muscle, kidney and pancreas.

Its subcellular location is the nucleus. Transcription factor. May be a nuclear hormone receptor coactivator. Enhances transcription of genes with retinoic acid response elements (RARE). The protein is Sp110 nuclear body protein (SP110) of Homo sapiens (Human).